We begin with the raw amino-acid sequence, 114 residues long: UPF0102 protein Amet_2739 (114 aa).

Belongs to the UPF0102 family.

This is UPF0102 protein Amet_2739 from Alkaliphilus metalliredigens (strain QYMF).